Reading from the N-terminus, the 728-residue chain is Catalase-peroxidase (728 aa).

Residues 91 to 218 (WHSAGTYRTA…LAAVQMGLIY (128 aa)) constitute a cross-link (tryptophyl-tyrosyl-methioninium (Trp-Tyr) (with M-244)). The Proton acceptor role is filled by H92. Residues 218–244 (YVNPEGPDGNPDPVAAARDIRDTFARM) constitute a cross-link (tryptophyl-tyrosyl-methioninium (Tyr-Met) (with W-91)). A heme b-binding site is contributed by H259.

The protein belongs to the peroxidase family. Peroxidase/catalase subfamily. As to quaternary structure, homodimer or homotetramer. Requires heme b as cofactor. Post-translationally, formation of the three residue Trp-Tyr-Met cross-link is important for the catalase, but not the peroxidase activity of the enzyme.

It carries out the reaction H2O2 + AH2 = A + 2 H2O. The catalysed reaction is 2 H2O2 = O2 + 2 H2O. Its function is as follows. Bifunctional enzyme with both catalase and broad-spectrum peroxidase activity. This chain is Catalase-peroxidase, found in Burkholderia thailandensis (strain ATCC 700388 / DSM 13276 / CCUG 48851 / CIP 106301 / E264).